We begin with the raw amino-acid sequence, 260 residues long: Coiled-coil domain-containing protein 127 (260 aa).

The stretch at 47-135 (ESQKEIEKAR…QIIQEKSQRQ (89 aa)) forms a coiled coil.

This Rattus norvegicus (Rat) protein is Coiled-coil domain-containing protein 127 (Ccdc127).